A 360-amino-acid polypeptide reads, in one-letter code: Transcription factor MYB39 (360 aa).

HTH myb-type domains follow at residues 10-62 (DKGV…MNYL) and 63-117 (RPDI…RKKL). DNA-binding regions (H-T-H motif) lie at residues 38 to 62 (WRSLPKLAGLNRCGKSCRLRWMNYL) and 90 to 113 (WSKIAGHLPGRTDNEIKNYWNTHM). A disordered region spans residues 299-324 (PSTGSVSVSPETTSLNHPSTAQHSSG).

The protein resides in the nucleus. The protein is Transcription factor MYB39 (MYB39) of Arabidopsis thaliana (Mouse-ear cress).